We begin with the raw amino-acid sequence, 380 residues long: 3-dehydroquinate synthase (380 aa).

Belongs to the archaeal-type DHQ synthase family.

The catalysed reaction is 2-amino-2,3,7-trideoxy-D-lyxo-hept-6-ulosonate + NAD(+) + H2O = 3-dehydroquinate + NH4(+) + NADH + H(+). Functionally, catalyzes the oxidative deamination and cyclization of 2-amino-3,7-dideoxy-D-threo-hept-6-ulosonic acid (ADH) to yield 3-dehydroquinate (DHQ), which is fed into the canonical shikimic pathway of aromatic amino acid biosynthesis. The sequence is that of 3-dehydroquinate synthase from Methanosarcina mazei (strain ATCC BAA-159 / DSM 3647 / Goe1 / Go1 / JCM 11833 / OCM 88) (Methanosarcina frisia).